The primary structure comprises 287 residues: Elongation factor Ts (287 aa).

The tract at residues 80–83 (TDFL) is involved in Mg(2+) ion dislocation from EF-Tu.

The protein belongs to the EF-Ts family.

It localises to the cytoplasm. Functionally, associates with the EF-Tu.GDP complex and induces the exchange of GDP to GTP. It remains bound to the aminoacyl-tRNA.EF-Tu.GTP complex up to the GTP hydrolysis stage on the ribosome. This is Elongation factor Ts from Stutzerimonas stutzeri (strain A1501) (Pseudomonas stutzeri).